The chain runs to 612 residues: uncharacterized protein (612 aa).

One can recognise a J domain in the interval 8 to 75; that stretch reads ELYLALGLPK…SKKEIYDNFG (68 aa). A helical membrane pass occupies residues 445–465; the sequence is AVFWGLVFPITSILGVEQFFL.

It belongs to the DnaJ family.

The protein resides in the membrane. This is an uncharacterized protein from Schizosaccharomyces pombe (strain 972 / ATCC 24843) (Fission yeast).